Consider the following 77-residue polypeptide: UPF0213 protein VNG_2274C (77 aa).

Residues 1–75 (MHHVYVIECS…KQLSRAQKEA (75 aa)) enclose the GIY-YIG domain.

Belongs to the UPF0213 family.

This chain is UPF0213 protein VNG_2274C, found in Halobacterium salinarum (strain ATCC 700922 / JCM 11081 / NRC-1) (Halobacterium halobium).